We begin with the raw amino-acid sequence, 122 residues long: Large ribosomal subunit protein uL14 (122 aa).

Belongs to the universal ribosomal protein uL14 family. In terms of assembly, part of the 50S ribosomal subunit. Forms a cluster with proteins L3 and L19. In the 70S ribosome, L14 and L19 interact and together make contacts with the 16S rRNA in bridges B5 and B8.

Binds to 23S rRNA. Forms part of two intersubunit bridges in the 70S ribosome. This is Large ribosomal subunit protein uL14 from Verminephrobacter eiseniae (strain EF01-2).